Reading from the N-terminus, the 404-residue chain is Alanyl-tRNA editing protein AlaX-L (404 aa).

4 residues coordinate Zn(2+): histidine 104, histidine 108, cysteine 202, and histidine 206.

This sequence belongs to the class-II aminoacyl-tRNA synthetase family. Editing domain AlaX-L subfamily. It depends on Zn(2+) as a cofactor.

The protein resides in the cytoplasm. Functionally, functions in trans to edit the amino acid moiety from mischarged charged tRNA(Ala). This chain is Alanyl-tRNA editing protein AlaX-L (alaXL), found in Pyrococcus horikoshii (strain ATCC 700860 / DSM 12428 / JCM 9974 / NBRC 100139 / OT-3).